A 265-amino-acid chain; its full sequence is 3-methyl-2-oxobutanoate hydroxymethyltransferase (265 aa).

Positions 45 and 84 each coordinate Mg(2+). Residues 45–46 (DS), aspartate 84, and lysine 112 each bind 3-methyl-2-oxobutanoate. Glutamate 114 contacts Mg(2+). Glutamate 181 functions as the Proton acceptor in the catalytic mechanism.

Belongs to the PanB family. In terms of assembly, homodecamer; pentamer of dimers. Mg(2+) is required as a cofactor.

Its subcellular location is the cytoplasm. The enzyme catalyses 3-methyl-2-oxobutanoate + (6R)-5,10-methylene-5,6,7,8-tetrahydrofolate + H2O = 2-dehydropantoate + (6S)-5,6,7,8-tetrahydrofolate. Its pathway is cofactor biosynthesis; (R)-pantothenate biosynthesis; (R)-pantoate from 3-methyl-2-oxobutanoate: step 1/2. Functionally, catalyzes the reversible reaction in which hydroxymethyl group from 5,10-methylenetetrahydrofolate is transferred onto alpha-ketoisovalerate to form ketopantoate. In Yersinia pseudotuberculosis serotype O:1b (strain IP 31758), this protein is 3-methyl-2-oxobutanoate hydroxymethyltransferase.